The following is a 349-amino-acid chain: MLHRIELPQKIVVGSGAIDALREVLEEFAGRNSSIAVISGPNVWRLYGERFRSIVEGFVEYSFFEARNASVEYAEKLLEDVKAYSPSLVVGFGGGKSIDLAKYVAYRLGVRMISVPTSPSHDGIASPFTSLKGLDKPHSVRTVTPAAIIADIDIIASAPIRLIRAGAGDLIAKLTAIRDWRLAHKLKGEYYGEYAAKLALLSAKHVIEYASQIGRGVKEAVRVLVEGLVSSGVAMCIAGSTRPASGSEHLFAHALDLIAPGKALHGEEVALGTIMMMYLHGGDWRHVRRTIRRLGLPVTAKELGLSDEVIVKALTMAHRIRPERYTILGESGLTWEAAERLARVTGVIG.

NAD(+) contacts are provided by residues 95-99 (GKSID) and 117-120 (TSPS). Asp122 contributes to the substrate binding site. Ser126 is a binding site for NAD(+). Residue Asp169 participates in substrate binding. Positions 169 and 249 each coordinate Zn(2+). Position 253 (His253) interacts with substrate. His265 provides a ligand contact to Zn(2+).

Belongs to the glycerol-1-phosphate dehydrogenase family. Homodimer. It depends on Zn(2+) as a cofactor.

Its subcellular location is the cytoplasm. The catalysed reaction is sn-glycerol 1-phosphate + NAD(+) = dihydroxyacetone phosphate + NADH + H(+). It catalyses the reaction sn-glycerol 1-phosphate + NADP(+) = dihydroxyacetone phosphate + NADPH + H(+). Its pathway is membrane lipid metabolism; glycerophospholipid metabolism. Catalyzes the NAD(P)H-dependent reduction of dihydroxyacetonephosphate (DHAP or glycerone phosphate) to glycerol 1-phosphate (G1P). The G1P thus generated is used as the glycerophosphate backbone of phospholipids in the cellular membranes of Archaea. The chain is Glycerol-1-phosphate dehydrogenase [NAD(P)+] from Hyperthermus butylicus (strain DSM 5456 / JCM 9403 / PLM1-5).